A 576-amino-acid chain; its full sequence is Proteinaceous RNase P 3 (576 aa).

The span at 65–75 (NRRSRHDDESP) shows a compositional bias: basic and acidic residues. Residues 65–88 (NRRSRHDDESPKNPNKKKKGNRNP) are disordered. 4 PPR repeats span residues 88-123 (PEKS…DIRL), 129-166 (QSLL…GISP), 167-201 (NESS…GGVS), and 204-238 (RLRT…GIVL). The region spanning 335–570 (SSAGKCLSCD…KEESLRSWMC (236 aa)) is the PRORP domain. Residues Cys340 and Cys343 each coordinate Zn(2+). Positions 402, 480, 481, and 499 each coordinate Mn(2+). Residues His553 and Cys570 each contribute to the Zn(2+) site.

The protein belongs to the PPR family. P subfamily. Requires Mg(2+) as cofactor. The cofactor is Mn(2+).

The protein resides in the nucleus. It catalyses the reaction Endonucleolytic cleavage of RNA, removing 5'-extranucleotides from tRNA precursor.. In terms of biological role, endonuclease RNase P responsible for the 5' maturation of tRNA precursors. Also involved in the maturation of mRNA and small nucleolar RNA (snoRNA). The protein is Proteinaceous RNase P 3 (PRORP3) of Arabidopsis thaliana (Mouse-ear cress).